An 89-amino-acid chain; its full sequence is Small ribosomal subunit protein uS15 (89 aa).

Belongs to the universal ribosomal protein uS15 family. Part of the 30S ribosomal subunit. Forms a bridge to the 50S subunit in the 70S ribosome, contacting the 23S rRNA.

Functionally, one of the primary rRNA binding proteins, it binds directly to 16S rRNA where it helps nucleate assembly of the platform of the 30S subunit by binding and bridging several RNA helices of the 16S rRNA. In terms of biological role, forms an intersubunit bridge (bridge B4) with the 23S rRNA of the 50S subunit in the ribosome. This Lactobacillus delbrueckii subsp. bulgaricus (strain ATCC 11842 / DSM 20081 / BCRC 10696 / JCM 1002 / NBRC 13953 / NCIMB 11778 / NCTC 12712 / WDCM 00102 / Lb 14) protein is Small ribosomal subunit protein uS15.